We begin with the raw amino-acid sequence, 91 residues long: Small ribosomal subunit protein uS15 (91 aa).

This sequence belongs to the universal ribosomal protein uS15 family. In terms of assembly, part of the 30S ribosomal subunit. Forms a bridge to the 50S subunit in the 70S ribosome, contacting the 23S rRNA.

Functionally, one of the primary rRNA binding proteins, it binds directly to 16S rRNA where it helps nucleate assembly of the platform of the 30S subunit by binding and bridging several RNA helices of the 16S rRNA. Forms an intersubunit bridge (bridge B4) with the 23S rRNA of the 50S subunit in the ribosome. The polypeptide is Small ribosomal subunit protein uS15 (Rickettsia africae (strain ESF-5)).